Reading from the N-terminus, the 284-residue chain is Release factor glutamine methyltransferase (284 aa).

S-adenosyl-L-methionine is bound by residues 121 to 125 (GTGTG), aspartate 144, tryptophan 172, and asparagine 188. 188-191 (NPPY) contacts substrate.

The protein belongs to the protein N5-glutamine methyltransferase family. PrmC subfamily.

The catalysed reaction is L-glutaminyl-[peptide chain release factor] + S-adenosyl-L-methionine = N(5)-methyl-L-glutaminyl-[peptide chain release factor] + S-adenosyl-L-homocysteine + H(+). Its function is as follows. Methylates the class 1 translation termination release factors RF1/PrfA and RF2/PrfB on the glutamine residue of the universally conserved GGQ motif. The sequence is that of Release factor glutamine methyltransferase from Aliivibrio fischeri (strain ATCC 700601 / ES114) (Vibrio fischeri).